Reading from the N-terminus, the 38-residue chain is Plastocyanin (38 aa).

The Plastocyanin-like domain occupies 1–38 (AQTVEVKMGADGGLLVFEPAKAGPHNVVFDEDNIPPGV). His25 lines the Cu cation pocket.

The protein belongs to the plastocyanin family. The cofactor is Cu(2+).

Its subcellular location is the plastid. The protein resides in the chloroplast thylakoid membrane. Participates in electron transfer between P700 and the cytochrome b6-f complex in photosystem I. In Thalassiosira oceanica (Marine diatom), this protein is Plastocyanin (PETE).